Here is a 129-residue protein sequence, read N- to C-terminus: Glycine cleavage system H protein (129 aa).

Residues 24–106 (SYTVGITEHA…YGEGWFFRVM (83 aa)) form the Lipoyl-binding domain. Position 65 is an N6-lipoyllysine (K65).

Belongs to the GcvH family. In terms of assembly, the glycine cleavage system is composed of four proteins: P, T, L and H. (R)-lipoate serves as cofactor.

Functionally, the glycine cleavage system catalyzes the degradation of glycine. The H protein shuttles the methylamine group of glycine from the P protein to the T protein. The chain is Glycine cleavage system H protein from Shewanella baltica (strain OS185).